The sequence spans 456 residues: Glycine--tRNA ligase (456 aa).

The substrate site is built by R98 and E168. Residues 200–202 (RNE), 210–215 (FRTREF), 285–286 (EL), and 329–332 (GVER) each bind ATP. 215 to 219 (FEQME) contacts substrate. Substrate is bound at residue 325-329 (EPSVG).

This sequence belongs to the class-II aminoacyl-tRNA synthetase family. As to quaternary structure, homodimer.

The protein resides in the cytoplasm. It catalyses the reaction tRNA(Gly) + glycine + ATP = glycyl-tRNA(Gly) + AMP + diphosphate. Catalyzes the attachment of glycine to tRNA(Gly). This chain is Glycine--tRNA ligase, found in Mycoplasma capricolum subsp. capricolum (strain California kid / ATCC 27343 / NCTC 10154).